A 250-amino-acid chain; its full sequence is NAD(P)H-hydrate epimerase (250 aa).

Residues Ala-14 to Lys-238 enclose the YjeF N-terminal domain. Residue Asn-74–Asp-78 participates in (6S)-NADPHX binding. 2 residues coordinate K(+): Asn-75 and Asp-143. (6S)-NADPHX-binding positions include Gly-147–Ala-154, Tyr-159, and Asp-180. Ser-183 lines the K(+) pocket.

The protein belongs to the NnrE/AIBP family. Requires K(+) as cofactor.

It catalyses the reaction (6R)-NADHX = (6S)-NADHX. The catalysed reaction is (6R)-NADPHX = (6S)-NADPHX. Functionally, catalyzes the epimerization of the S- and R-forms of NAD(P)HX, a damaged form of NAD(P)H that is a result of enzymatic or heat-dependent hydration. This is a prerequisite for the S-specific NAD(P)H-hydrate dehydratase to allow the repair of both epimers of NAD(P)HX. This is NAD(P)H-hydrate epimerase from Thalassiosira pseudonana (Marine diatom).